A 542-amino-acid polypeptide reads, in one-letter code: Endonuclease 4 homolog (542 aa).

Disordered stretches follow at residues 89 to 123 (NEEIIPESPPSKKLQQQQQQQQQQQSKLKPKQTSI) and 141 to 234 (PFFS…ENKF). Composition is skewed to low complexity over residues 99–115 (SKKLQQQQQQQQQQQSK) and 147–170 (NNASTTNTTTNNKNVNKKTTTTTT). Residues 171–206 (TKKRNNKDEENEDDNEEEEEEEEEEEDKKSKKKTTT) are a coiled coil. Positions 179–196 (EENEDDNEEEEEEEEEEE) are enriched in acidic residues. Residues 205 to 215 (TTTTTTTTTTA) show a composition bias toward low complexity. A compositionally biased stretch (basic residues) spans 216–227 (YKKKSSPKKKKV). The Nuclear localization signal motif lies at 222–227 (PKKKKV). Zn(2+)-binding residues include His328, His368, Glu404, Asp438, His441, His475, Asp488, His490, and Glu520.

Belongs to the AP endonuclease 2 family. Requires Zn(2+) as cofactor.

Its subcellular location is the nucleus. It carries out the reaction Endonucleolytic cleavage to 5'-phosphooligonucleotide end-products.. In terms of biological role, plays a role in DNA repair. It cleaves phosphodiester bonds at apurinic or apyrimidinic sites (AP sites) to produce new 5'-ends that are base-free deoxyribose 5-phosphate residues. This Dictyostelium discoideum (Social amoeba) protein is Endonuclease 4 homolog (apnA).